A 164-amino-acid chain; its full sequence is Nucleotide-binding protein EF_1165 (164 aa).

The protein belongs to the YajQ family.

In terms of biological role, nucleotide-binding protein. The polypeptide is Nucleotide-binding protein EF_1165 (Enterococcus faecalis (strain ATCC 700802 / V583)).